A 303-amino-acid polypeptide reads, in one-letter code: Protoheme IX farnesyltransferase (303 aa).

The next 6 membrane-spanning stretches (helical) occupy residues Met25 to Met45, Ile54 to Leu74, Cys118 to Val138, Ile166 to Val186, Leu230 to Ile250, and Phe280 to Ile300.

This sequence belongs to the UbiA prenyltransferase family. Protoheme IX farnesyltransferase subfamily. As to quaternary structure, interacts with CtaA.

The protein localises to the cell membrane. The enzyme catalyses heme b + (2E,6E)-farnesyl diphosphate + H2O = Fe(II)-heme o + diphosphate. Its pathway is porphyrin-containing compound metabolism; heme O biosynthesis; heme O from protoheme: step 1/1. In terms of biological role, converts heme B (protoheme IX) to heme O by substitution of the vinyl group on carbon 2 of heme B porphyrin ring with a hydroxyethyl farnesyl side group. This chain is Protoheme IX farnesyltransferase, found in Staphylococcus epidermidis (strain ATCC 35984 / DSM 28319 / BCRC 17069 / CCUG 31568 / BM 3577 / RP62A).